Consider the following 159-residue polypeptide: Putative viral CXC chemokine 2 (159 aa).

Intrachain disulfides connect cysteine 50–cysteine 77 and cysteine 52–cysteine 93.

It belongs to the intercrine alpha (chemokine CxC) family.

The polypeptide is Putative viral CXC chemokine 2 (UL147) (Human cytomegalovirus (strain Towne) (HHV-5)).